A 300-amino-acid chain; its full sequence is 33 kDa chaperonin (300 aa).

Disulfide bonds link Cys235/Cys237 and Cys269/Cys272.

It belongs to the HSP33 family. In terms of processing, under oxidizing conditions two disulfide bonds are formed involving the reactive cysteines. Under reducing conditions zinc is bound to the reactive cysteines and the protein is inactive.

The protein localises to the cytoplasm. Redox regulated molecular chaperone. Protects both thermally unfolding and oxidatively damaged proteins from irreversible aggregation. Plays an important role in the bacterial defense system toward oxidative stress. This Pseudomonas fluorescens (strain ATCC BAA-477 / NRRL B-23932 / Pf-5) protein is 33 kDa chaperonin.